A 298-amino-acid polypeptide reads, in one-letter code: Ribosomal protein uL3 glutamine methyltransferase (298 aa).

Belongs to the protein N5-glutamine methyltransferase family. PrmB subfamily.

The enzyme catalyses L-glutaminyl-[ribosomal protein uL3] + S-adenosyl-L-methionine = N(5)-methyl-L-glutaminyl-[ribosomal protein uL3] + S-adenosyl-L-homocysteine + H(+). Functionally, methylates large ribosomal subunit protein uL3 on a specific glutamine residue. In Bordetella pertussis (strain Tohama I / ATCC BAA-589 / NCTC 13251), this protein is Ribosomal protein uL3 glutamine methyltransferase.